The chain runs to 117 residues: UPF0295 protein GK0479 (117 aa).

Helical transmembrane passes span 12–32 (IRTF…LGLF) and 42–62 (LFML…FWIG).

It belongs to the UPF0295 family.

The protein localises to the cell membrane. The sequence is that of UPF0295 protein GK0479 from Geobacillus kaustophilus (strain HTA426).